We begin with the raw amino-acid sequence, 35 residues long: Toxin Ado1 (35 aa).

Cystine bridges form between C5-C20, C12-C25, and C19-C32.

The protein resides in the secreted. Functionally, binds reversibly and blocks P/Q-type voltage-gated calcium channels (Cav). This is Toxin Ado1 from Agriosphodrus dohrni (Japanese assassin-bug).